A 151-amino-acid polypeptide reads, in one-letter code: Non-specific lipid transfer protein GPI-anchored 30 (151 aa).

Positions 1-22 (MMMGMKFFSFYVVLLLVAASSG) are cleaved as a signal peptide. 4 disulfide bridges follow: cysteine 32–cysteine 69, cysteine 39–cysteine 53, cysteine 54–cysteine 97, and cysteine 67–cysteine 106. Asparagine 44 is a glycosylation site (N-linked (GlcNAc...) asparagine). Serine 120 carries the GPI-anchor amidated serine lipid modification. The propeptide at 121 to 151 (SSIGNTFSQSYWMTTLAIAATVLSYCHHIIS) is removed in mature form.

It belongs to the plant LTP family. Expressed in vascular tissues of all organs. Expressed in seedlings, preferentially in hypocotyls and roots. Also observed in siliques.

The protein resides in the cell membrane. Lipid transfer protein that promotes the number of phloem (pro)cambial and pericycle cells. In Arabidopsis thaliana (Mouse-ear cress), this protein is Non-specific lipid transfer protein GPI-anchored 30.